The sequence spans 312 residues: tRNA dimethylallyltransferase (312 aa).

ATP is bound at residue 11–18 (GPTAVGKT). 13–18 (TAVGKT) is a binding site for substrate. The interval 159–163 (QRVLR) is interaction with substrate tRNA.

This sequence belongs to the IPP transferase family. In terms of assembly, monomer. Requires Mg(2+) as cofactor.

The enzyme catalyses adenosine(37) in tRNA + dimethylallyl diphosphate = N(6)-dimethylallyladenosine(37) in tRNA + diphosphate. Catalyzes the transfer of a dimethylallyl group onto the adenine at position 37 in tRNAs that read codons beginning with uridine, leading to the formation of N6-(dimethylallyl)adenosine (i(6)A). The chain is tRNA dimethylallyltransferase from Macrococcus caseolyticus (strain JCSC5402) (Macrococcoides caseolyticum).